The following is a 215-amino-acid chain: FGFR1 oncogene partner 2 homolog (215 aa).

The stretch at A12–S186 forms a coiled coil. The disordered stretch occupies residues E193 to S215.

The protein belongs to the SIKE family.

It is found in the cytoplasm. The sequence is that of FGFR1 oncogene partner 2 homolog (fgfr1op2) from Xenopus laevis (African clawed frog).